We begin with the raw amino-acid sequence, 267 residues long: Hydroxyethylthiazole kinase 2 (267 aa).

Substrate is bound at residue methionine 41. Residues lysine 116 and threonine 166 each coordinate ATP. Substrate is bound at residue glycine 193.

Belongs to the Thz kinase family. Mg(2+) is required as a cofactor.

The enzyme catalyses 5-(2-hydroxyethyl)-4-methylthiazole + ATP = 4-methyl-5-(2-phosphooxyethyl)-thiazole + ADP + H(+). Its pathway is cofactor biosynthesis; thiamine diphosphate biosynthesis; 4-methyl-5-(2-phosphoethyl)-thiazole from 5-(2-hydroxyethyl)-4-methylthiazole: step 1/1. Its function is as follows. Catalyzes the phosphorylation of the hydroxyl group of 4-methyl-5-beta-hydroxyethylthiazole (THZ). The chain is Hydroxyethylthiazole kinase 2 from Streptococcus pneumoniae serotype 4 (strain ATCC BAA-334 / TIGR4).